A 161-amino-acid polypeptide reads, in one-letter code: uncharacterized protein (161 aa).

This is an uncharacterized protein from Lepidoptera (butterflies and moths).